A 61-amino-acid polypeptide reads, in one-letter code: Disintegrin atroxatin (61 aa).

The 61-residue stretch at 1–61 (NPCCDAATCK…ADCPRKGIYG (61 aa)) folds into the Disintegrin domain. Cystine bridges form between cysteine 3/cysteine 26, cysteine 9/cysteine 23, cysteine 17/cysteine 23, cysteine 22/cysteine 47, and cysteine 35/cysteine 54. The short motif at 39–41 (RGD) is the Cell attachment site element.

Belongs to the venom metalloproteinase (M12B) family. P-II subfamily. P-IIa sub-subfamily. Monomer (disintegrin). Expressed by the venom gland.

It localises to the secreted. Functionally, inhibits fibrinogen interaction with platelets. Acts by binding to alpha-IIb/beta-3 (ITGA2B/ITGB3) on the platelet surface and inhibits aggregation induced by ADP, thrombin, platelet-activating factor and collagen. The protein is Disintegrin atroxatin of Crotalus atrox (Western diamondback rattlesnake).